Consider the following 186-residue polypeptide: Lipid A palmitoyltransferase PagP (186 aa).

An N-terminal signal peptide occupies residues 1 to 25; it reads MKVSKYVAIFFFVFIQLISVGKVFA. Active-site residues include His-58, Asp-101, and Ser-102.

The protein belongs to the lipid A palmitoyltransferase family. As to quaternary structure, homodimer.

It is found in the cell outer membrane. The catalysed reaction is lipid A (E. coli) + a 1-hexadecanoyl-2-acyl-sn-glycero-3-phosphocholine = hepta-acyl lipid A (E. coli) + a 2-acyl-sn-glycero-3-phosphocholine. It catalyses the reaction lipid IIA + a 1-hexadecanoyl-2-acyl-sn-glycero-3-phosphocholine = lipid IIB + a 2-acyl-sn-glycero-3-phosphocholine. It carries out the reaction lipid IVA (E. coli) + a 1-hexadecanoyl-2-acyl-sn-glycero-3-phosphocholine = lipid IVB (E. coli) + a 2-acyl-sn-glycero-3-phosphocholine. Functionally, transfers a palmitate residue from the sn-1 position of a phospholipid to the N-linked hydroxymyristate on the proximal unit of lipid A or its precursors. The protein is Lipid A palmitoyltransferase PagP of Escherichia coli O6:K15:H31 (strain 536 / UPEC).